A 284-amino-acid chain; its full sequence is 2-dehydro-3-deoxyphosphooctonate aldolase (284 aa).

This sequence belongs to the KdsA family.

Its subcellular location is the cytoplasm. It carries out the reaction D-arabinose 5-phosphate + phosphoenolpyruvate + H2O = 3-deoxy-alpha-D-manno-2-octulosonate-8-phosphate + phosphate. It participates in carbohydrate biosynthesis; 3-deoxy-D-manno-octulosonate biosynthesis; 3-deoxy-D-manno-octulosonate from D-ribulose 5-phosphate: step 2/3. Its pathway is bacterial outer membrane biogenesis; lipopolysaccharide biosynthesis. The polypeptide is 2-dehydro-3-deoxyphosphooctonate aldolase (Actinobacillus succinogenes (strain ATCC 55618 / DSM 22257 / CCUG 43843 / 130Z)).